Reading from the N-terminus, the 187-residue chain is Probable chorismate pyruvate-lyase (187 aa).

Substrate contacts are provided by Arg-80, Leu-118, and Glu-170.

Belongs to the UbiC family.

The protein resides in the cytoplasm. It carries out the reaction chorismate = 4-hydroxybenzoate + pyruvate. It functions in the pathway cofactor biosynthesis; ubiquinone biosynthesis. In terms of biological role, removes the pyruvyl group from chorismate, with concomitant aromatization of the ring, to provide 4-hydroxybenzoate (4HB) for the ubiquinone pathway. The chain is Probable chorismate pyruvate-lyase from Pseudomonas fluorescens (strain ATCC BAA-477 / NRRL B-23932 / Pf-5).